The chain runs to 508 residues: Photosystem II CP47 reaction center protein (508 aa).

The next 6 helical transmembrane spans lie at 21–36 (SVHI…WAGS), 101–115 (IVFS…IWHW), 140–156 (GIHL…FGAF), 203–218 (IAAG…FHLS), 237–252 (VLSS…AFVV), and 457–472 (SFAL…HGAR).

It belongs to the PsbB/PsbC family. PsbB subfamily. As to quaternary structure, PSII is composed of 1 copy each of membrane proteins PsbA, PsbB, PsbC, PsbD, PsbE, PsbF, PsbH, PsbI, PsbJ, PsbK, PsbL, PsbM, PsbT, PsbX, PsbY, PsbZ, Psb30/Ycf12, at least 3 peripheral proteins of the oxygen-evolving complex and a large number of cofactors. It forms dimeric complexes. Binds multiple chlorophylls. PSII binds additional chlorophylls, carotenoids and specific lipids. serves as cofactor.

Its subcellular location is the plastid. It is found in the chloroplast thylakoid membrane. Functionally, one of the components of the core complex of photosystem II (PSII). It binds chlorophyll and helps catalyze the primary light-induced photochemical processes of PSII. PSII is a light-driven water:plastoquinone oxidoreductase, using light energy to abstract electrons from H(2)O, generating O(2) and a proton gradient subsequently used for ATP formation. The chain is Photosystem II CP47 reaction center protein from Nymphaea alba (White water-lily).